The following is a 172-amino-acid chain: Lipoprotein signal peptidase (172 aa).

3 helical membrane passes run 10 to 30 (LIWL…KAWV), 68 to 88 (WQLW…AFWL), and 98 to 118 (SALP…DRLM). Residues Asp124 and Asp142 contribute to the active site. The helical transmembrane segment at 138-158 (FNIADSAIVGGAIGIAVFGLF) threads the bilayer.

This sequence belongs to the peptidase A8 family.

Its subcellular location is the cell inner membrane. It carries out the reaction Release of signal peptides from bacterial membrane prolipoproteins. Hydrolyzes -Xaa-Yaa-Zaa-|-(S,diacylglyceryl)Cys-, in which Xaa is hydrophobic (preferably Leu), and Yaa (Ala or Ser) and Zaa (Gly or Ala) have small, neutral side chains.. The protein operates within protein modification; lipoprotein biosynthesis (signal peptide cleavage). This protein specifically catalyzes the removal of signal peptides from prolipoproteins. In Xanthomonas axonopodis pv. citri (strain 306), this protein is Lipoprotein signal peptidase.